Consider the following 349-residue polypeptide: uncharacterized protein (349 aa).

A helical transmembrane segment spans residues 16 to 36 (LVITIISTGLIFGMTLVLTGL). A disordered region spans residues 111 to 139 (FGAPEHGPGMPRVSEGRSPSKPDEVAASS). Residues 124-134 (SEGRSPSKPDE) show a composition bias toward basic and acidic residues. 3 consecutive transmembrane segments (helical) span residues 231-251 (ISIV…SVVY), 284-304 (VIAL…APLF), and 307-327 (IVAV…VIGL).

The protein belongs to the ABC-4 integral membrane protein family. The complex is composed of two ATP-binding proteins (MT0079), two transmembrane proteins (MT0078) and a solute-binding protein.

The protein localises to the cell membrane. Probably part of an ABC transporter complex. Probably responsible for the translocation of the substrate across the membrane. This is an uncharacterized protein from Mycobacterium tuberculosis (strain CDC 1551 / Oshkosh).